The following is a 310-amino-acid chain: MLGGGWRSLGTALVALGAGALLRAGPAQLRAVFLHTEHEQRKSKTVAQANMKVEVLPALTDNYMYLLIDEETKEAAIVDPVQPQKVLDAVKKHGVKLTSVLTTHHHWDHAGGNEKLVKLETGLRVYGGDSRVGALTQKVSHLTSLKVGSLNVKCLCTPCHTSGHICYYVTKPNSSEPPAVFTGDTLFVAGCGKFFEGTPEEMYRALIEILGSLDPETRVYCGHEYTINNLKFARHVEPNNVSIQEKLAWAKAKYDSGEPTIPSTIAEEFTYNPFMRVREKTVQEHAGETDPIRTMGAIRKEKDNFRVPKD.

The Zn(2+) site is built by H104, H106, D108, H109, H160, and D184. Substrate contacts are provided by residues 193 to 195 (KFF), 223 to 225 (HEY), and 299 to 302 (RKEK). Residue H223 participates in Zn(2+) binding.

The protein belongs to the metallo-beta-lactamase superfamily. Glyoxalase II family. Monomer. It depends on Zn(2+) as a cofactor.

The protein localises to the mitochondrion matrix. The protein resides in the cytoplasm. The enzyme catalyses an S-(2-hydroxyacyl)glutathione + H2O = a 2-hydroxy carboxylate + glutathione + H(+). The catalysed reaction is (R)-S-lactoylglutathione + H2O = (R)-lactate + glutathione + H(+). Its function is as follows. Thiolesterase that catalyzes the hydrolysis of S-D-lactoyl-glutathione to form glutathione and D-lactic acid. The polypeptide is Hydroxyacylglutathione hydrolase, mitochondrial (HAGH) (Gallus gallus (Chicken)).